Reading from the N-terminus, the 88-residue chain is Small ribosomal subunit protein uS15c (88 aa).

It belongs to the universal ribosomal protein uS15 family. As to quaternary structure, part of the 30S ribosomal subunit.

The protein resides in the plastid. Its subcellular location is the chloroplast. The chain is Small ribosomal subunit protein uS15c (rps15) from Lobularia maritima (Sweet alyssum).